Reading from the N-terminus, the 250-residue chain is MNVVETSSEMNSNVEKASTPKQENNKRFERKSRPSSRQKVVKDEFEEKVVTIRRVTKVTKGGRHFRFAAVVVVGNKKGLVGMGTGKANEVPEAIKKAIKEAKKNLVSVTLRNTTVPHEVLGTFGAGKILIKPAKVGTGIIAGGPARAVIELSGISDVYAKSLGSNNAINMIRATFEGLSSMQTLKRVQELRYGKTFDKQKVALVEKTAETKNFEKKPPKSTTKKMASKKIEKEDVIAEPMIKNEAENSAE.

A compositionally biased stretch (polar residues) spans 1–22; that stretch reads MNVVETSSEMNSNVEKASTPKQ. Positions 1 to 40 are disordered; the sequence is MNVVETSSEMNSNVEKASTPKQENNKRFERKSRPSSRQKV. The S5 DRBM domain occupies 45–108; it reads FEEKVVTIRR…KEAKKNLVSV (64 aa).

Belongs to the universal ribosomal protein uS5 family. As to quaternary structure, part of the 30S ribosomal subunit. Contacts proteins S4 and S8.

In terms of biological role, with S4 and S12 plays an important role in translational accuracy. Functionally, located at the back of the 30S subunit body where it stabilizes the conformation of the head with respect to the body. The sequence is that of Small ribosomal subunit protein uS5 from Mycoplasma capricolum subsp. capricolum (strain California kid / ATCC 27343 / NCTC 10154).